Here is an 860-residue protein sequence, read N- to C-terminus: Gag-Pro polyprotein (860 aa).

Gly2 carries the N-myristoyl glycine; by host lipid modification. Basic and acidic residues-rich tracts occupy residues 151–169 (YDEPYEEKEKADKNEEKDH) and 178–191 (QRKENSEGKRKEKD). The segment at 151–191 (YDEPYEEKEKADKNEEKDHVRKIKKVVQRKENSEGKRKEKD) is disordered. A PTAP/PSAP motif motif is present at residues 305–308 (PSAP). 2 CCHC-type zinc fingers span residues 525–542 (PVCFSCGKTGHIRKDCKD) and 552–569 (GLCPRCKKGYHWKSECKS). Residues 572–631 (DKDGNPLPPLETNAENSKNLVKGQSPSPAQKGDGVKGSGLNPEAPPFTIHDLPRGTPGSA) are disordered. Residues 584–599 (NAENSKNLVKGQSPSP) show a composition bias toward polar residues. Residues 766 to 841 (FLGLLDTGAD…LPFTLWGRDI (76 aa)) enclose the Peptidase A2 domain. The Protease; shared with dimeric partner role is filled by Asp771.

Homodimer; when myristoylated. In terms of assembly, homodimer. As to quaternary structure, NC-dUTPase is a homotrimer. Post-translationally, released by autocatalytic processing. In terms of processing, myristoylated. Myristoylation of the matrix (MA) domain mediates the transport and binding of Gag polyproteins to the host plasma membrane and is required for the assembly of viral particles. Specific enzymatic cleavages in vivo yield mature proteins.

The protein resides in the virion. The enzyme catalyses dUTP + H2O = dUMP + diphosphate + H(+). With respect to regulation, inhibited by pepstatin A. Matrix protein. Functionally, nucleocapsid protein p14: Binds strongly to viral nucleic acids and promote their aggregation. Also destabilizes the nucleic acids duplexes via highly structured zinc-binding motifs. In terms of biological role, capsid protein. Its function is as follows. The aspartyl protease mediates proteolytic cleavages of Gag and Gag-Pol polyproteins during or shortly after the release of the virion from the plasma membrane. Cleavages take place as an ordered, step-wise cascade to yield mature proteins. This process is called maturation. Displays maximal activity during the budding process just prior to particle release from the cell. The protein is Gag-Pro polyprotein (gag-pro) of Mouse mammary tumor virus (strain BR6) (MMTV).